A 156-amino-acid polypeptide reads, in one-letter code: MMPGQIPDPLVTAGSLPSVGPLAGFPATTLTEQLKLAELYRLGTVLSPLMLNRHAKRPFDAIKSEDDDDDERKKRRREKNKVAAARCRNRKKERTDFLQKESERLEMLNSDLKSQIEELKSERQQLIVMLNLHRPTCIVRTDSVKSDEHPLEPRED.

The segment at 56–95 is disordered; it reads KRPFDAIKSEDDDDDERKKRRREKNKVAAARCRNRKKERT. The bZIP domain maps to 70–133; the sequence is DERKKRRREK…QQLIVMLNLH (64 aa). Residues 72 to 94 form a basic motif region; sequence RKKRRREKNKVAAARCRNRKKER. The segment at 98–126 is leucine-zipper; it reads LQKESERLEMLNSDLKSQIEELKSERQQL.

Belongs to the bZIP family. ATF subfamily.

The protein resides in the nucleus. Its function is as follows. Component of the AP-1 transcription factor that represses transactivation mediated by the Jun family of proteins. The polypeptide is Jun dimerization protein 2 (jdp2) (Danio rerio (Zebrafish)).